The primary structure comprises 117 residues: Small ribosomal subunit protein uS12c (117 aa).

Residues 9-40 form a disordered region; sequence RNARQPIENRKKSPALRGCPQRRGTITPKKPN.

Belongs to the universal ribosomal protein uS12 family. Part of the 30S ribosomal subunit.

The protein localises to the plastid. It is found in the chloroplast. Functionally, with S4 and S5 plays an important role in translational accuracy. Located at the interface of the 30S and 50S subunits. The sequence is that of Small ribosomal subunit protein uS12c (rps12) from Pinus koraiensis (Korean pine).